Consider the following 38-residue polypeptide: Photosystem II reaction center protein X (38 aa).

The helical transmembrane segment at 9–29 (ISSLTAGGLVVLTIAVALIVI) threads the bilayer.

It belongs to the PsbX family. Type 1 subfamily. As to quaternary structure, PSII is composed of 1 copy each of membrane proteins PsbA, PsbB, PsbC, PsbD, PsbE, PsbF, PsbH, PsbI, PsbJ, PsbK, PsbL, PsbM, PsbT, PsbX, PsbY, PsbZ, Psb30/Ycf12, at least 3 peripheral proteins of the oxygen-evolving complex and a large number of cofactors. It forms dimeric complexes.

It localises to the plastid. It is found in the chloroplast thylakoid membrane. In terms of biological role, involved in the binding and/or turnover of quinones at the Q(B) site of photosystem II (PSII). PSII is a light-driven water plastoquinone oxidoreductase, using light energy to abstract electrons from H(2)O, generating a proton gradient subsequently used for ATP formation. This chain is Photosystem II reaction center protein X, found in Trieres chinensis (Marine centric diatom).